The chain runs to 290 residues: MTDTKTLLPLRSVSQLNQYTRCPQAYKLARIDKVWARPAAWLPQGTAFHTVAEVYEKALAEGREMSLERAQEIFREEYAKDIGALCDETPNFEWWFWSGPYNGERDIERRFHLGLEQVEKFIAWRKDKGQQIWTTPGRGICSTEAWKDTNCKECEQPKPAIELPFNIELDGIRVRGFIDAVVVVNGELRVRDYKTGNSPGDDFQLGVYALAVAMTYDVEAPKTGDYFMAGKKGIKAKPTAPYDLTDWTRERITERFHEVEARIQAGDFEPLPEPDKCGFCDVNYSCPVFK.

The polypeptide is Gene 69 protein (69) (Mycobacterium phage L5 (Mycobacteriophage L5)).